A 123-amino-acid polypeptide reads, in one-letter code: Small ribosomal subunit protein uS12cz/uS12cy (123 aa).

The protein belongs to the universal ribosomal protein uS12 family. Part of the 30S ribosomal subunit.

The protein localises to the plastid. The protein resides in the chloroplast. Its function is as follows. With S4 and S5 plays an important role in translational accuracy. Located at the interface of the 30S and 50S subunits. The polypeptide is Small ribosomal subunit protein uS12cz/uS12cy (rps12-A) (Cucumis sativus (Cucumber)).